Consider the following 311-residue polypeptide: Ribose-phosphate pyrophosphokinase (311 aa).

ATP-binding positions include 37 to 39 (DGE) and 96 to 97 (RQ). Mg(2+) is bound by residues H130 and D170. K193 is a catalytic residue. D-ribose 5-phosphate is bound by residues R195, D219, and 223-227 (DTAGT).

Belongs to the ribose-phosphate pyrophosphokinase family. Class I subfamily. As to quaternary structure, homohexamer. It depends on Mg(2+) as a cofactor.

It localises to the cytoplasm. It catalyses the reaction D-ribose 5-phosphate + ATP = 5-phospho-alpha-D-ribose 1-diphosphate + AMP + H(+). Its pathway is metabolic intermediate biosynthesis; 5-phospho-alpha-D-ribose 1-diphosphate biosynthesis; 5-phospho-alpha-D-ribose 1-diphosphate from D-ribose 5-phosphate (route I): step 1/1. In terms of biological role, involved in the biosynthesis of the central metabolite phospho-alpha-D-ribosyl-1-pyrophosphate (PRPP) via the transfer of pyrophosphoryl group from ATP to 1-hydroxyl of ribose-5-phosphate (Rib-5-P). The sequence is that of Ribose-phosphate pyrophosphokinase from Aquifex aeolicus (strain VF5).